Consider the following 1158-residue polypeptide: Adipocyte enhancer-binding protein 1 (1158 aa).

The N-terminal stretch at 1-25 (MAAVRGAPLLSCLLALLALCPGGRP) is a signal peptide. The tract at residues 41–387 (FLSELEPEPR…TPTEKVKCPP (347 aa)) is disordered. The span at 45 to 55 (LEPEPREDDVE) shows a compositional bias: acidic residues. Positions 100–110 (DKGPKVPKESL) are enriched in basic and acidic residues. Over residues 116–166 (PPKKGKEKPPKATKKPKEKPPKATKKPKEKPPKATKKPKEKPPKATKKPPS) the composition is skewed to basic residues. Residues 182–192 (PLPPPPSPGPE) show a composition bias toward pro residues. The segment covering 193–202 (ELPQEGGAPL) has biased composition (low complexity). Residues 211–223 (EETHVEAREHQPE) show a composition bias toward basic and acidic residues. Residues 252–266 (RQKQPRPPPSRRRRP) show a composition bias toward basic residues. A compositionally biased stretch (basic and acidic residues) spans 267–289 (ERVWPEPPEEKAPAPAPEERIEP). Residues 290 to 300 (PVKPLLPPLPP) are compositionally biased toward pro residues. Positions 326–371 (PDAERQTDEEKEELKKPKKEDSSPKEETDKWAVEKGKDHKEPRKGE) are enriched in basic and acidic residues. One can recognise an F5/8 type C domain in the interval 383–540 (VKCPPIGMES…LCMRLEVLGC (158 aa)). The segment at 390–555 (MESHRIEDNQ…YSYYAQNEVV (166 aa)) is required for DNA-binding and interaction with NFKBIA. An interaction with MAPK1 and MAPK3 region spans residues 421–624 (TGATEDDYYD…EPEFRYTAGI (204 aa)). Residue asparagine 528 is glycosylated (N-linked (GlcNAc...) asparagine). The interaction with PTEN stretch occupies residues 555–985 (VATDDLDFRH…TQCNFILARS (431 aa)). The Peptidase M14 domain maps to 563–904 (RHHSYKDMRQ…EALLTFMEQV (342 aa)). An N-linked (GlcNAc...) asparagine glycan is attached at asparagine 922. The required for transcriptional repression stretch occupies residues 941–1158 (DYWRILNPGE…ETYTVNFGDF (218 aa)). The tract at residues 1006–1158 (DPSRPMTPQQ…ETYTVNFGDF (153 aa)) is interaction with MAPK1 and MAPK3. Residues 1108 to 1137 (EFETQLEPEFETQLEPEFEEEEEEEKEEEI) show a composition bias toward acidic residues. The interval 1108–1141 (EFETQLEPEFETQLEPEFEEEEEEEKEEEIATGQ) is disordered.

Belongs to the peptidase M14 family. Isoform 1: Interacts with different types of collagen, including collagens I, III, and V. Isoform 2: Interacts with GNG5, NFKBIA, MAPK1, MAPK3 and PTEN. Interaction with MAPK1 may stimulate DNA-binding. May interact with calmodulin. Binds to DNA in vitro. Post-translationally, phosphorylated by MAPK1 in vitro. As to expression, expressed in osteoblast and visceral fat.

It localises to the secreted. The protein localises to the cytoplasm. Its subcellular location is the nucleus. Its function is as follows. As a positive regulator of collagen fibrillogenesis, it is probably involved in the organization and remodeling of the extracellular matrix. May positively regulate MAP-kinase activity in adipocytes, leading to enhanced adipocyte proliferation and reduced adipocyte differentiation. May also positively regulate NF-kappa-B activity in macrophages by promoting the phosphorylation and subsequent degradation of I-kappa-B-alpha (NFKBIA), leading to enhanced macrophage inflammatory responsiveness. Can act as a transcriptional repressor. This Homo sapiens (Human) protein is Adipocyte enhancer-binding protein 1 (AEBP1).